Reading from the N-terminus, the 324-residue chain is Elongation factor P--(R)-beta-lysine ligase (324 aa).

Residue 75–77 (SPE) coordinates substrate. Residues 99 to 101 (RNK) and Asn108 each bind ATP. Tyr117 serves as a coordination point for substrate. 243-244 (EL) is an ATP binding site. Position 250 (Glu250) interacts with substrate. An ATP-binding site is contributed by Gly299.

It belongs to the class-II aminoacyl-tRNA synthetase family. EpmA subfamily. In terms of assembly, homodimer.

The catalysed reaction is D-beta-lysine + L-lysyl-[protein] + ATP = N(6)-((3R)-3,6-diaminohexanoyl)-L-lysyl-[protein] + AMP + diphosphate + H(+). In terms of biological role, with EpmB is involved in the beta-lysylation step of the post-translational modification of translation elongation factor P (EF-P). Catalyzes the ATP-dependent activation of (R)-beta-lysine produced by EpmB, forming a lysyl-adenylate, from which the beta-lysyl moiety is then transferred to the epsilon-amino group of a conserved specific lysine residue in EF-P. The polypeptide is Elongation factor P--(R)-beta-lysine ligase (Buchnera aphidicola subsp. Acyrthosiphon pisum (strain 5A)).